A 701-amino-acid chain; its full sequence is MTTANLLVELFVEELPPKALKKLGEAFAAALTESLVAQGLVHAQAAVTHFASPRRLGAHIENVLERSADKPVSTKLMPVSVGLDADGNATPALLKRLAALGADASAVATLRRESDGKAEALFMDSVAKGISLGLGLAKALWESLDKLPIPKVMSYQLADGWSTVNFVRPVHGLVALHGTDPVDVRMFGLTAGRKTHGHRFEAAADPIVLKDADSYAQQLESEGAVIANFAERRAEIVRQLEAAAAPLGLVPVEDEALLDEVTALVERPNVLLGQFEQAFLEVPQECLILTMKANQKYFPLLDAAGKLTNKFLIVSNISPADASAVVGGNERVVRPRLADAKFFFDQDRKKTLDARVLGLAKVVYHNKLGTQGERVTRVQAVARAIGEKLGGEALALKADQAALLAKADLLTDMVGEFPELQGVMGRYYAQHDGVADDVAFAIEDHYRPRFAGDDLPRNPVGVCVALADKLETLVGLFGIGEKPTGDKDPFALRRHALGVVRMLIEKHLPIGLNELVSIAFSAFQQGLLGQAHTDVYLFMFERLSGAMREQGYSANEVDAVLSLNPIRIDLVPQQLEAVRAFAALPEAAALAAANKRVGNILKKAEGEVGASADPGRFVEAAERALFAALDEVAPRAAAAFGSGDYTASLQALAALKAPVDAFFDQVMVNADDPALRANRLALLNQLHRTMNRVADISRLAA.

The protein belongs to the class-II aminoacyl-tRNA synthetase family. Tetramer of two alpha and two beta subunits.

It is found in the cytoplasm. It catalyses the reaction tRNA(Gly) + glycine + ATP = glycyl-tRNA(Gly) + AMP + diphosphate. The chain is Glycine--tRNA ligase beta subunit from Thiobacillus denitrificans (strain ATCC 25259 / T1).